We begin with the raw amino-acid sequence, 547 residues long: RING finger protein ETP1 homolog (547 aa).

Residues 208–248 (CVVCLERMDSSITGLITIVCQHTFHCPCLQKWGNSSCPVCR) form an RING-type zinc finger. A UBP-type; degenerate zinc finger spans residues 245–338 (PVCRYTQKVQ…GKLVELSTDG (94 aa)). The Zn(2+) site is built by Cys-262, Cys-265, Cys-274, Cys-277, Cys-282, His-289, His-293, and His-299. Polar residues predominate over residues 514–523 (LPNNSTVRSN). The segment at 514–547 (LPNNSTVRSNSVKSKKKKKKKPVVPSSSGSLGTD) is disordered. A compositionally biased stretch (basic residues) spans 526–535 (KSKKKKKKKP).

It localises to the cytoplasm. May act as a cytoplasmic retention protein with a role in regulating nuclear transport. The chain is RING finger protein ETP1 homolog from Schizosaccharomyces pombe (strain 972 / ATCC 24843) (Fission yeast).